Reading from the N-terminus, the 460-residue chain is Glycine--tRNA ligase (460 aa).

R99 and E162 together coordinate substrate. ATP-binding positions include 194–196 (RNE), 204–209 (FRTREF), 281–282 (EL), and 325–328 (GVGR). Position 209–213 (209–213 (FEQME)) interacts with substrate. 321–325 (EPAAG) is a binding site for substrate.

It belongs to the class-II aminoacyl-tRNA synthetase family. Homodimer.

The protein localises to the cytoplasm. It carries out the reaction tRNA(Gly) + glycine + ATP = glycyl-tRNA(Gly) + AMP + diphosphate. Catalyzes the attachment of glycine to tRNA(Gly). This is Glycine--tRNA ligase from Streptomyces coelicolor (strain ATCC BAA-471 / A3(2) / M145).